A 2293-amino-acid polypeptide reads, in one-letter code: Protein Ycf2 (2293 aa).

1647-1654 (GSIGTGRS) contributes to the ATP binding site.

The protein belongs to the Ycf2 family.

Its subcellular location is the plastid. The protein resides in the chloroplast stroma. In terms of biological role, probable ATPase of unknown function. Its presence in a non-photosynthetic plant (Epifagus virginiana) and experiments in tobacco indicate that it has an essential function which is probably not related to photosynthesis. This Lobularia maritima (Sweet alyssum) protein is Protein Ycf2.